The sequence spans 296 residues: 33 kDa chaperonin (296 aa).

2 disulfide bridges follow: C233-C235 and C267-C270.

This sequence belongs to the HSP33 family. Under oxidizing conditions two disulfide bonds are formed involving the reactive cysteines. Under reducing conditions zinc is bound to the reactive cysteines and the protein is inactive.

The protein resides in the cytoplasm. Redox regulated molecular chaperone. Protects both thermally unfolding and oxidatively damaged proteins from irreversible aggregation. Plays an important role in the bacterial defense system toward oxidative stress. The sequence is that of 33 kDa chaperonin from Actinobacillus pleuropneumoniae serotype 3 (strain JL03).